We begin with the raw amino-acid sequence, 60 residues long: Photosystem II reaction center protein L (60 aa).

The helical transmembrane segment at 39 to 59 (SLYWGLLLIFVLAVLFSSYIF) threads the bilayer.

This sequence belongs to the PsbL family. PSII is composed of 1 copy each of membrane proteins PsbA, PsbB, PsbC, PsbD, PsbE, PsbF, PsbH, PsbI, PsbJ, PsbK, PsbL, PsbM, PsbT, PsbX, PsbY, PsbZ, Psb30/Ycf12, at least 3 peripheral proteins of the oxygen-evolving complex and a large number of cofactors. It forms dimeric complexes.

It is found in the plastid. It localises to the chloroplast thylakoid membrane. One of the components of the core complex of photosystem II (PSII). PSII is a light-driven water:plastoquinone oxidoreductase that uses light energy to abstract electrons from H(2)O, generating O(2) and a proton gradient subsequently used for ATP formation. It consists of a core antenna complex that captures photons, and an electron transfer chain that converts photonic excitation into a charge separation. This subunit is found at the monomer-monomer interface and is required for correct PSII assembly and/or dimerization. The chain is Photosystem II reaction center protein L from Oedogonium cardiacum (Filamentous green alga).